Consider the following 177-residue polypeptide: Peptidyl-tRNA hydrolase (177 aa).

Tyr-14 contacts tRNA. His-19 acts as the Proton acceptor in catalysis. TRNA contacts are provided by Phe-64, Asn-66, and Asn-112.

It belongs to the PTH family. Monomer.

It localises to the cytoplasm. It carries out the reaction an N-acyl-L-alpha-aminoacyl-tRNA + H2O = an N-acyl-L-amino acid + a tRNA + H(+). Its function is as follows. Hydrolyzes ribosome-free peptidyl-tRNAs (with 1 or more amino acids incorporated), which drop off the ribosome during protein synthesis, or as a result of ribosome stalling. In terms of biological role, catalyzes the release of premature peptidyl moieties from peptidyl-tRNA molecules trapped in stalled 50S ribosomal subunits, and thus maintains levels of free tRNAs and 50S ribosomes. This is Peptidyl-tRNA hydrolase from Latilactobacillus sakei (Lactobacillus sakei).